A 173-amino-acid chain; its full sequence is Flagellar biosynthetic protein FliV (173 aa).

Belongs to the FliB family.

Its function is as follows. Required for the secretion of flagellin and expression of motility. This chain is Flagellar biosynthetic protein FliV (fliV), found in Salmonella muenchen.